A 287-amino-acid polypeptide reads, in one-letter code: Acetyl-coenzyme A carboxylase carboxyl transferase subunit beta (287 aa).

In terms of domain architecture, CoA carboxyltransferase N-terminal spans 25–287; the sequence is VWTKCSACEQ…KMLNTHVIEE (263 aa). C29, C32, C48, and C51 together coordinate Zn(2+). A C4-type zinc finger spans residues 29–51; the sequence is CSACEQVLYRAELERNLEVCPKC.

It belongs to the AccD/PCCB family. Acetyl-CoA carboxylase is a heterohexamer composed of biotin carboxyl carrier protein (AccB), biotin carboxylase (AccC) and two subunits each of ACCase subunit alpha (AccA) and ACCase subunit beta (AccD). Requires Zn(2+) as cofactor.

It is found in the cytoplasm. It carries out the reaction N(6)-carboxybiotinyl-L-lysyl-[protein] + acetyl-CoA = N(6)-biotinyl-L-lysyl-[protein] + malonyl-CoA. It functions in the pathway lipid metabolism; malonyl-CoA biosynthesis; malonyl-CoA from acetyl-CoA: step 1/1. Functionally, component of the acetyl coenzyme A carboxylase (ACC) complex. Biotin carboxylase (BC) catalyzes the carboxylation of biotin on its carrier protein (BCCP) and then the CO(2) group is transferred by the transcarboxylase to acetyl-CoA to form malonyl-CoA. The sequence is that of Acetyl-coenzyme A carboxylase carboxyl transferase subunit beta from Aeromonas hydrophila subsp. hydrophila (strain ATCC 7966 / DSM 30187 / BCRC 13018 / CCUG 14551 / JCM 1027 / KCTC 2358 / NCIMB 9240 / NCTC 8049).